The sequence spans 164 residues: uncharacterized protein (164 aa).

CBS domains lie at 9–66 and 72–128; these read ATTK…DIDS and MTKD…VHTM.

This is an uncharacterized protein from Acidianus ambivalens (Desulfurolobus ambivalens).